Reading from the N-terminus, the 209-residue chain is Inducible T-cell costimulator (209 aa).

The signal sequence occupies residues 1–19; that stretch reads MKSDLRYFFLFCIQVEILA. Over 20-141 the chain is Extracellular; the sequence is GEFNDSAASE…YESELCCQLK (122 aa). An N-linked (GlcNAc...) asparagine glycan is attached at Asn23. Residues 30–133 form the Ig-like V-type domain; that stretch reads MFIFHNGGVQ…LSREYLNIYE (104 aa). Disulfide bonds link Cys42/Cys109 and Cys63/Cys83. Residue Asn89 is glycosylated (N-linked (GlcNAc...) asparagine). Residues 142–162 form a helical membrane-spanning segment; sequence FWLPIGCAAFVTVCVFGCVLM.

As to quaternary structure, homodimer; disulfide-linked. Interacts with ICOSLG. Interacts with PIK3R1. Interacts with TBK1; this interaction is critical for the maturation of T follicular regulatory cells. N-glycosylated.

It is found in the cell membrane. Stimulatory receptor expressed in activated or antigen-experienced T-cells that plays an important role in the immune response. Upon binding to its ligand ICOSL expressed on antigen presenting cells (APCs), delivers costimulatory signals that enhances all basic T-cell responses to a foreign antigen, namely proliferation, secretion of lymphokines including IL10, up-regulation of molecules that mediate cell-cell interaction, and effective help for antibody secretion by B-cells. Also acts as a costimulatory receptor critical for the differentiation of T follicular regulatory cells upon immune challenges such as viral infection. Mechanistically, potentiates TCR-induced calcium flux by augmenting PLCG1 activation and actin remodeling. In addition, activates PI3K signaling pathways independently of calcium flux. Essential both for efficient interaction between T and B-cells and for normal antibody responses to T-cell dependent antigens. Prevents the apoptosis of pre-activated T-cells. Plays a critical role in CD40-mediated class switching of immunoglobin isotypes. This chain is Inducible T-cell costimulator (ICOS), found in Bos taurus (Bovine).